Reading from the N-terminus, the 233-residue chain is Large ribosomal subunit protein bL25 (233 aa).

The disordered stretch occupies residues methionine 1 to glutamate 23.

Belongs to the bacterial ribosomal protein bL25 family. CTC subfamily. Part of the 50S ribosomal subunit; part of the 5S rRNA/L5/L18/L25 subcomplex. Contacts the 5S rRNA. Binds to the 5S rRNA independently of L5 and L18.

Its function is as follows. This is one of the proteins that binds to the 5S RNA in the ribosome where it forms part of the central protuberance. The chain is Large ribosomal subunit protein bL25 from Nitrobacter hamburgensis (strain DSM 10229 / NCIMB 13809 / X14).